Consider the following 109-residue polypeptide: COX assembly mitochondrial protein 2 (109 aa).

Positions 10–54 (FHSCLDFINALDKCHQKEYYKRIFGLCNNEKDALNKCLKEASLNN) constitute a CHCH domain. Short sequence motifs (cx9C motif) lie at residues 13-23 (CLDFINALDKC) and 36-46 (CNNEKDALNKC). 2 disulfides stabilise this stretch: Cys-13–Cys-46 and Cys-23–Cys-36.

This sequence belongs to the CMC family. As to quaternary structure, interacts with CMC1.

The protein resides in the mitochondrion inner membrane. It localises to the mitochondrion intermembrane space. Required for mitochondrial cytochrome c oxidase (COX) assembly and respiration. May be involved in copper trafficking and distribution to mitochondrial COX and SOD1. The polypeptide is COX assembly mitochondrial protein 2 (CMC2) (Saccharomyces cerevisiae (strain ATCC 204508 / S288c) (Baker's yeast)).